The primary structure comprises 1357 residues: DNA-directed RNA polymerase subunit beta (1357 aa).

This sequence belongs to the RNA polymerase beta chain family. In terms of assembly, the RNAP catalytic core consists of 2 alpha, 1 beta, 1 beta' and 1 omega subunit. When a sigma factor is associated with the core the holoenzyme is formed, which can initiate transcription.

It carries out the reaction RNA(n) + a ribonucleoside 5'-triphosphate = RNA(n+1) + diphosphate. In terms of biological role, DNA-dependent RNA polymerase catalyzes the transcription of DNA into RNA using the four ribonucleoside triphosphates as substrates. The protein is DNA-directed RNA polymerase subunit beta of Pseudomonas syringae pv. syringae (strain B728a).